Reading from the N-terminus, the 417-residue chain is Secreted aspartic protease 4 (417 aa).

An N-terminal signal peptide occupies residues 1–18 (MFLQNILSVLAFALLIDA). Positions 19 to 75 (APVKRSTGFVTLDFNVKRSLVDPKDPTVEVKRSPLFLDIEPTEIPVDDTGRNDVGKR) are cleaved as a propeptide — activation peptide. The 315-residue stretch at 89-403 (YSADITIGSN…DLDDRKISMA (315 aa)) folds into the Peptidase A1 domain. Residue Asp-107 is part of the active site. Pepstatin A is bound at residue 107–109 (DTG). Residues Cys-122 and Cys-134 are joined by a disulfide bond. N-linked (GlcNAc...) asparagine glycosylation occurs at Asn-137. 160-161 (AD) serves as a coordination point for pepstatin A. Asp-267 is a binding site for Zn(2+). Residue Asp-293 is part of the active site. A pepstatin A-binding site is contributed by 293-297 (DSGTT). A disulfide bond links Cys-331 and Cys-369.

This sequence belongs to the peptidase A1 family. In terms of assembly, monomer.

Its subcellular location is the secreted. The enzyme catalyses Preferential cleavage at the carboxyl of hydrophobic amino acids, but fails to cleave 15-Leu-|-Tyr-16, 16-Tyr-|-Leu-17 and 24-Phe-|-Phe-25 of insulin B chain. Activates trypsinogen, and degrades keratin.. Its activity is regulated as follows. Activity is inhibited by squash aspartic peptidase inhibitor (SQAPI). In terms of biological role, secreted aspartic peptidases (SAPs) are a group of ten acidic hydrolases considered as key virulence factors. These enzymes supply the fungus with nutrient amino acids as well as are able to degrade the selected host's proteins involved in the immune defense. Moreover, acts toward human hemoglobin though limited proteolysis to generate a variety of antimicrobial hemocidins, enabling to compete with the other microorganisms of the same physiological niche using the microbicidal peptides generated from the host protein. Plays a key role in defense against host by cleaving histatin-5 (Hst 5), a peptide from human saliva that carries out fungicidal activity. The cleavage rate decreases in an order of SAP2 &gt; SAP9 &gt; SAP3 &gt; SAP7 &gt; SAP4 &gt; SAP1 &gt; SAP8. The first cleavage occurs between residues 'Lys-17' and 'His-18' of Hst 5, giving DSHAKRHHGYKRKFHEK and HHSHRGY peptides. Simultaneously, the DSHAKRHHGY and KRKFHEKHHSHRGY peptides are also formed. The protein is Secreted aspartic protease 4 of Candida albicans (strain SC5314 / ATCC MYA-2876) (Yeast).